Consider the following 463-residue polypeptide: ATP synthase subunit beta (463 aa).

152–159 (GGAGVGKT) lines the ATP pocket.

This sequence belongs to the ATPase alpha/beta chains family. In terms of assembly, F-type ATPases have 2 components, CF(1) - the catalytic core - and CF(0) - the membrane proton channel. CF(1) has five subunits: alpha(3), beta(3), gamma(1), delta(1), epsilon(1). CF(0) has three main subunits: a(1), b(2) and c(9-12). The alpha and beta chains form an alternating ring which encloses part of the gamma chain. CF(1) is attached to CF(0) by a central stalk formed by the gamma and epsilon chains, while a peripheral stalk is formed by the delta and b chains.

It is found in the cell membrane. The enzyme catalyses ATP + H2O + 4 H(+)(in) = ADP + phosphate + 5 H(+)(out). In terms of biological role, produces ATP from ADP in the presence of a proton gradient across the membrane. The catalytic sites are hosted primarily by the beta subunits. The protein is ATP synthase subunit beta of Clostridium botulinum (strain Eklund 17B / Type B).